The sequence spans 764 residues: Nucleolar complex-associated protein 2 (764 aa).

Positions 3–69 form a coiled coil; that stretch reads AKDDKKRVKK…EEELKRLQEK (67 aa). Disordered regions lie at residues 23–67, 89–113, 627–646, and 651–726; these read ELNN…KRLQ, ATEI…EGDD, AVFG…DRME, and AFNS…EDDA. Basic and acidic residues predominate over residues 30–41; sequence IDAHDIVMEQKS. Residues 42–51 show a composition bias toward basic residues; it reads DKKRGKKVKS. A compositionally biased stretch (basic and acidic residues) spans 52–67; that stretch reads KKAEAEEHEEELKRLQ. The segment covering 90 to 113 has biased composition (acidic residues); it reads TEIEDDADVEPDTDLEDTEKEGDD. Residues 661-672 show a composition bias toward basic and acidic residues; sequence DSKEKEPEEEKT. The Nuclear localization signal 1 motif lies at 673 to 680; it reads KKKKRKRG. Residues 673-682 are compositionally biased toward basic residues; the sequence is KKKKRKRGGK. A compositionally biased stretch (acidic residues) spans 693 to 726; it reads GLGEDDVVEDFVLSSDEEEEDLFDIGGDKDEDDA. The Nuclear localization signal 2 signature appears at 738–745; the sequence is SKKTKGTY.

Belongs to the NOC2 family. In terms of assembly, component of nucleolar complexes. Forms homodimers. Interacts with RBL and NOC3 in both the nucleolus and nucleoplasm. Binds to SWA2.

The protein resides in the nucleus. It localises to the nucleolus. The protein localises to the nucleoplasm. Functionally, together with SWA2, probably involved in pre-ribosome export from the nucleus to the cytoplasm. The sequence is that of Nucleolar complex-associated protein 2 from Arabidopsis thaliana (Mouse-ear cress).